A 697-amino-acid polypeptide reads, in one-letter code: Putative cryptochrome DASH (697 aa).

Positions 5–164 (KLLVYLLRRD…GFKLWHDEKY (160 aa)) constitute a Photolyase/cryptochrome alpha/beta domain. Disordered stretches follow at residues 170-215 (DNGL…FPSW) and 554-697 (FSVT…PPHI). Positions 188 to 198 (KTQEPLRERPR) are enriched in basic and acidic residues. Over residues 560–569 (RGNRRPYRWR) the composition is skewed to basic residues. Residues 578–590 (GRGGRGGGTGNTS) are compositionally biased toward gly residues. Composition is skewed to low complexity over residues 659–675 (QQQQ…YAHQ) and 683–697 (RQQQ…PPHI).

This sequence belongs to the DNA photolyase class-1 family. It depends on FAD as a cofactor. The cofactor is (6R)-5,10-methylene-5,6,7,8-tetrahydrofolate.

May have a photoreceptor function. In Gibberella zeae (strain ATCC MYA-4620 / CBS 123657 / FGSC 9075 / NRRL 31084 / PH-1) (Wheat head blight fungus), this protein is Putative cryptochrome DASH.